We begin with the raw amino-acid sequence, 649 residues long: Solute carrier family 22 member 17 (649 aa).

Residues 1 to 70 (MAPRVATGTP…GGDGLGSSLS (70 aa)) are disordered. Residues 24-34 (VEITPTSNGQV) show a composition bias toward polar residues. Residues 47 to 57 (QGEREREREGE) are compositionally biased toward basic and acidic residues. Residues asparagine 134 and asparagine 143 are each glycosylated (N-linked (GlcNAc...) asparagine). 11 helical membrane passes run 211–231 (VILE…FLGY), 240–260 (GIVL…AAAG), 265–285 (VMAL…GVYL), 300–320 (ALAG…LALV), 330–350 (MITA…FLES), 414–433 (NIWK…HAIR), 448–468 (FYLC…FLGV), 477–497 (GILL…LGLW), 526–546 (FSVL…LLAA), 557–577 (GLGL…AQRL), and 584–604 (FLQH…IMLL).

It belongs to the major facilitator (TC 2.A.1) superfamily. Organic cation transporter (TC 2.A.1.19) family. As to expression, expressed in brain.

It is found in the cell membrane. The protein localises to the vacuole membrane. Its function is as follows. Cell surface receptor for LCN2 (24p3) that plays a key role in iron homeostasis and transport. Able to bind iron-bound LCN2 (holo-24p3), followed by internalization of holo-24p3 and release of iron, thereby increasing intracellular iron concentration and leading to inhibition of apoptosis. Also binds iron-free LCN2 (apo-24p3), followed by internalization of apo-24p3 and its association with an intracellular siderophore, leading to iron chelation and iron transfer to the extracellular medium, thereby reducing intracellular iron concentration and resulting in apoptosis. The chain is Solute carrier family 22 member 17 (SLC22A17) from Homo sapiens (Human).